Here is a 299-residue protein sequence, read N- to C-terminus: tRNA dimethylallyltransferase (299 aa).

11–18 provides a ligand contact to ATP; the sequence is GPTAVGKT. 13-18 contacts substrate; the sequence is TAVGKT. The segment at 36-39 is interaction with substrate tRNA; it reads DSQQ.

Belongs to the IPP transferase family. As to quaternary structure, monomer. Mg(2+) serves as cofactor.

It catalyses the reaction adenosine(37) in tRNA + dimethylallyl diphosphate = N(6)-dimethylallyladenosine(37) in tRNA + diphosphate. Functionally, catalyzes the transfer of a dimethylallyl group onto the adenine at position 37 in tRNAs that read codons beginning with uridine, leading to the formation of N6-(dimethylallyl)adenosine (i(6)A). The polypeptide is tRNA dimethylallyltransferase (Streptococcus pyogenes serotype M1).